The following is a 161-amino-acid chain: Regulator of ribonuclease activity A (161 aa).

Belongs to the RraA family. As to quaternary structure, homotrimer. Binds to both RNA-binding sites in the C-terminal region of Rne and to RhlB.

It is found in the cytoplasm. Its function is as follows. Globally modulates RNA abundance by binding to RNase E (Rne) and regulating its endonucleolytic activity. Can modulate Rne action in a substrate-dependent manner by altering the composition of the degradosome. Modulates RNA-binding and helicase activities of the degradosome. This Shigella flexneri serotype 5b (strain 8401) protein is Regulator of ribonuclease activity A.